The primary structure comprises 375 residues: Nucleosome assembly protein 1-like 4 (375 aa).

Positions 1 to 31 (MADHSFSDGVPSDSVEAAKNASNTEKLTDQV) are disordered. Alanine 2 carries the N-acetylalanine modification. 3 positions are modified to phosphoserine: serine 5, serine 7, and serine 12. Polar residues predominate over residues 20-31 (NASNTEKLTDQV). Threonine 51 bears the Phosphothreonine mark. A phosphoserine mark is found at serine 53 and serine 54. Threonine 58 bears the Phosphothreonine mark. Residue lysine 105 is modified to N6-acetyllysine. The interval 116–137 (PTDAESEWHSENEEEEKLAGDM) is disordered. The span at 121–137 (SEWHSENEEEEKLAGDM) shows a compositional bias: basic and acidic residues. Serine 125 is subject to Phosphoserine. At lysine 146 the chain carries N6-acetyllysine. The Nuclear localization signal signature appears at 265–271 (IKKKQKH). Phosphoserine is present on serine 304. Residues 339–375 (AIEDDDNFEEGEEGEEEELEGDEEGEDEDDAEINPKV) are disordered.

Belongs to the nucleosome assembly protein (NAP) family. As to quaternary structure, interacts with core (H2A, CD2APH2B, H3, H4) and linker (H1) histones. (Microbial infection) Interacts with Chikungunya virus non-structural protein 3 (via C-terminus). Post-translationally, phosphorylated at the G0/G1 boundary but it is not phosphorylated in S-phase. Phosphorylated protein remains in the cytoplasm in a complex with histones during the G0/G1 transition, whereas dephosphorylation triggers its transport into the nucleus at the G1/S-boundary. In terms of processing, polyglutamylated by TTLL4, a modification that occurs exclusively on glutamate residues and results in polyglutamate chains on the gamma-carboxyl group. Some residues may also be monoglycylated but not polyglycylated due to the absence of functional TTLL10 in human. As to expression, ubiquitous. Biallelically expressed in fetal and adult tissues. Highest levels in testis.

The protein localises to the nucleus. It localises to the cytoplasm. Acts as a histone chaperone in nucleosome assembly. In Homo sapiens (Human), this protein is Nucleosome assembly protein 1-like 4.